The following is a 475-amino-acid chain: Lipoprotein lipase (475 aa).

An N-terminal signal peptide occupies residues 1–27 (MESKALLLVALGMWFQSLTATRGGVAA). The segment at 32-53 (GDFIDIESKFALRTPEDTAEDT) is interaction with GPIHBP1. A disulfide bond links Cys54 and Cys67. The N-linked (GlcNAc...) asparagine glycan is linked to Asn70. Tyr121 is modified (3'-nitrotyrosine). Residue Ser159 is the Nucleophile of the active site. Residue Asp183 is the Charge relay system of the active site. Tyr191 is modified (3'-nitrotyrosine). 4 residues coordinate Ca(2+): Ala194, Arg197, Ser199, and Asp202. A disulfide bridge connects residues Cys243 and Cys266. The Charge relay system role is filled by His268. Intrachain disulfides connect Cys291-Cys310 and Cys302-Cys305. One can recognise a PLAT domain in the interval 341 to 464 (FHYQVKIHFS…KGKASVVFVK (124 aa)). Residue Tyr343 is modified to 3'-nitrotyrosine. Asn386 carries an N-linked (GlcNAc...) asparagine glycan. The tract at residues 417-421 (WSDWW) is important for interaction with lipoprotein particles. The important for heparin binding stretch occupies residues 430–434 (KIRVK). Residues 443–467 (IFCSREKVSHLQKGKASVVFVKCHD) form an interaction with GPIHBP1 region. Cys445 and Cys465 form a disulfide bridge.

This sequence belongs to the AB hydrolase superfamily. Lipase family. In terms of assembly, homodimer. Interacts with GPIHBP1 with 1:1 stoichiometry. Interacts with APOC2; the interaction activates LPL activity in the presence of lipids. Interaction with heparan sulfate proteoglycans is required to protect LPL against loss of activity. Associates with lipoprotein particles in blood plasma. Interacts with LMF1 and SEL1L; interaction with SEL1L is required to prevent aggregation of newly synthesized LPL in the endoplasmic reticulum (ER), and for normal export of LPL from the ER to the extracellular space. Interacts with SORL1; SORL1 acts as a sorting receptor, promoting LPL localization to endosomes and later to lysosomes, leading to degradation of newly synthesized LPL. In terms of processing, tyrosine nitration after lipopolysaccharide (LPS) challenge down-regulates the lipase activity.

The protein resides in the cell membrane. Its subcellular location is the secreted. The protein localises to the extracellular space. It is found in the extracellular matrix. It carries out the reaction a triacylglycerol + H2O = a diacylglycerol + a fatty acid + H(+). Its activity is regulated as follows. The apolipoprotein APOC2 acts as a coactivator of LPL activity. Ca(2+) binding promotes protein stability and formation of the active homodimer. Interaction with GPIHBP1 protects LPL against inactivation by ANGPTL4. Key enzyme in triglyceride metabolism. Catalyzes the hydrolysis of triglycerides from circulating chylomicrons and very low density lipoproteins (VLDL), and thereby plays an important role in lipid clearance from the blood stream, lipid utilization and storage. Mediates margination of triglyceride-rich lipoprotein particles in capillaries. Recruited to its site of action on the luminal surface of vascular endothelium by binding to GPIHBP1 and cell surface heparan sulfate proteoglycans. In Neovison vison (American mink), this protein is Lipoprotein lipase (LPL).